The sequence spans 421 residues: Testin (421 aa).

The PET domain maps to 92-199 (MILTNPVAAK…GDVKLPCEMD (108 aa)). The segment at 133–164 (EKQPVAGSEGAQYRKKQLAKQLPAHDQDPSKC) is disordered. A compositionally biased stretch (basic and acidic residues) spans 155 to 164 (PAHDQDPSKC). LIM zinc-binding domains are found at residues 234 to 297 (YSCY…CDSE), 299 to 359 (PRCA…NHAV), and 362 to 421 (QGCH…KMMS).

This sequence belongs to the prickle / espinas / testin family. Interacts via LIM domain 1 with ZYX. Interacts (via LIM domain 3) with ENAH and VASP. Interacts with ALKBH4, talin, actin, alpha-actinin, GRIP1 and PXN. Interacts (via LIM domain 2) with ACTL7A (via N-terminus). Heterodimer with ACTL7A; the heterodimer interacts with ENAH to form a heterotrimer.

Its subcellular location is the cytoplasm. It localises to the cell junction. The protein resides in the focal adhesion. In terms of biological role, scaffold protein that may play a role in cell adhesion, cell spreading and in the reorganization of the actin cytoskeleton. Plays a role in the regulation of cell proliferation. May act as a tumor suppressor. This is Testin (TES) from Colobus guereza (Mantled guereza).